The chain runs to 118 residues: Large ribosomal subunit protein bL19 (118 aa).

This sequence belongs to the bacterial ribosomal protein bL19 family.

Functionally, this protein is located at the 30S-50S ribosomal subunit interface and may play a role in the structure and function of the aminoacyl-tRNA binding site. In Levilactobacillus brevis (strain ATCC 367 / BCRC 12310 / CIP 105137 / JCM 1170 / LMG 11437 / NCIMB 947 / NCTC 947) (Lactobacillus brevis), this protein is Large ribosomal subunit protein bL19.